A 197-amino-acid polypeptide reads, in one-letter code: Protocatechuate 3,4-dioxygenase alpha chain (197 aa).

Position 130 (arginine 130) interacts with 3,4-dihydroxybenzoate.

Belongs to the intradiol ring-cleavage dioxygenase family. In terms of assembly, the enzyme is an oligomer of 12 copies of the alpha and beta chains. Requires Fe(3+) as cofactor.

It carries out the reaction 3,4-dihydroxybenzoate + O2 = 3-carboxy-cis,cis-muconate + 2 H(+). It participates in aromatic compound metabolism; beta-ketoadipate pathway; 3-carboxy-cis,cis-muconate from 3,4-dihydroxybenzoate: step 1/1. Its function is as follows. Plays an essential role in the utilization of numerous aromatic and hydroaromatic compounds via the beta-ketoadipate pathway. The protein is Protocatechuate 3,4-dioxygenase alpha chain (pcaG) of Burkholderia cepacia (Pseudomonas cepacia).